We begin with the raw amino-acid sequence, 300 residues long: Bifunctional protein FolD (300 aa).

NADP(+) is bound by residues 169-171, serine 196, and isoleucine 237; that span reads GRG.

Belongs to the tetrahydrofolate dehydrogenase/cyclohydrolase family. In terms of assembly, homodimer.

The catalysed reaction is (6R)-5,10-methylene-5,6,7,8-tetrahydrofolate + NADP(+) = (6R)-5,10-methenyltetrahydrofolate + NADPH. It carries out the reaction (6R)-5,10-methenyltetrahydrofolate + H2O = (6R)-10-formyltetrahydrofolate + H(+). The protein operates within one-carbon metabolism; tetrahydrofolate interconversion. Its function is as follows. Catalyzes the oxidation of 5,10-methylenetetrahydrofolate to 5,10-methenyltetrahydrofolate and then the hydrolysis of 5,10-methenyltetrahydrofolate to 10-formyltetrahydrofolate. The polypeptide is Bifunctional protein FolD (Clavibacter michiganensis subsp. michiganensis (strain NCPPB 382)).